We begin with the raw amino-acid sequence, 153 residues long: H/ACA ribonucleoprotein complex subunit 2 (153 aa).

Residue Lys-3 forms a Glycyl lysine isopeptide (Lys-Gly) (interchain with G-Cter in SUMO2) linkage. Lys-5 participates in a covalent cross-link: Glycyl lysine isopeptide (Lys-Gly) (interchain with G-Cter in SUMO); alternate. A Glycyl lysine isopeptide (Lys-Gly) (interchain with G-Cter in SUMO1); alternate cross-link involves residue Lys-5. A Glycyl lysine isopeptide (Lys-Gly) (interchain with G-Cter in SUMO2); alternate cross-link involves residue Lys-5. Ser-19 carries the post-translational modification Phosphoserine.

It belongs to the eukaryotic ribosomal protein eL8 family. Part of the H/ACA small nucleolar ribonucleoprotein (H/ACA snoRNP) complex, which contains NHP2/NOLA2, GAR1/NOLA1, NOP10/NOLA3, and DKC1/NOLA4, which is presumed to be the catalytic subunit. The complex contains a stable core formed by binding of one or two NOP10-DKC1 heterodimers to NHP2; GAR1 subsequently binds to this core via DKC1. The complex binds a box H/ACA small nucleolar RNA (snoRNA), which may target the specific site of modification within the RNA substrate. During assembly, the complex contains NAF1 instead of GAR1/NOLA1. The complex also interacts with TERC, which contains a 3'-terminal domain related to the box H/ACA snoRNAs. Specific interactions with snoRNAs or TERC are mediated by GAR1 and NHP2. Associates with NOLC1/NOPP140. H/ACA snoRNPs interact with the SMN complex, consisting of SMN1 or SMN2, GEMIN2/SIP1, DDX20/GEMIN3, and GEMIN4. This is mediated by interaction between GAR1 and SMN1 or SMN2. The SMN complex may be required for correct assembly of the H/ACA snoRNP complex. Component of the telomerase holoenzyme complex composed of one molecule of TERT, one molecule of WRAP53/TCAB1, two molecules of H/ACA ribonucleoprotein complex subunits DKC1, NOP10, NHP2 and GAR1, and a telomerase RNA template component (TERC). The telomerase holoenzyme complex is associated with TEP1, SMG6/EST1A and POT1.

It is found in the nucleus. Its subcellular location is the nucleolus. The protein localises to the cajal body. Functionally, required for ribosome biogenesis and telomere maintenance. Part of the H/ACA small nucleolar ribonucleoprotein (H/ACA snoRNP) complex, which catalyzes pseudouridylation of rRNA. This involves the isomerization of uridine such that the ribose is subsequently attached to C5, instead of the normal N1. Each rRNA can contain up to 100 pseudouridine ('psi') residues, which may serve to stabilize the conformation of rRNAs. May also be required for correct processing or intranuclear trafficking of TERC, the RNA component of the telomerase reverse transcriptase (TERT) holoenzyme. In Pongo abelii (Sumatran orangutan), this protein is H/ACA ribonucleoprotein complex subunit 2 (NHP2).